The sequence spans 118 residues: Large ribosomal subunit protein bL17 (118 aa).

It belongs to the bacterial ribosomal protein bL17 family. Part of the 50S ribosomal subunit. Contacts protein L32.

The polypeptide is Large ribosomal subunit protein bL17 (Aster yellows witches'-broom phytoplasma (strain AYWB)).